Reading from the N-terminus, the 232-residue chain is MDKAQQDALKKAAGIEAAKLVENGMIAGLGTGSTVKFLVDELGRRHQEEGLEFTGVTTSRRTQAQAESYGIKIVDIDDVDHIDVTIDGADEVDKNFNGIKGGGAALLWEKIVATNSNQIVWIVDESKVVDTIGKFPLPVEVIPFGAGQVIKKFEARGYKPVLRLDADGKEVRTDENNFVVDLHLERIDHPQELAEDLINTVGVVEHGLFLNMVDKVIVGDPNGPRVMTNANK.

Residues 31 to 34 (TGST), 87 to 90 (DGAD), and 100 to 103 (KGGG) contribute to the substrate site. The Proton acceptor role is filled by glutamate 109. Lysine 127 provides a ligand contact to substrate.

This sequence belongs to the ribose 5-phosphate isomerase family. In terms of assembly, homodimer.

The enzyme catalyses aldehydo-D-ribose 5-phosphate = D-ribulose 5-phosphate. It participates in carbohydrate degradation; pentose phosphate pathway; D-ribose 5-phosphate from D-ribulose 5-phosphate (non-oxidative stage): step 1/1. Catalyzes the reversible conversion of ribose-5-phosphate to ribulose 5-phosphate. The polypeptide is Ribose-5-phosphate isomerase A (Bifidobacterium longum (strain NCC 2705)).